The primary structure comprises 237 residues: NAD(P)H-quinone oxidoreductase subunit K, chloroplastic (237 aa).

4 residues coordinate [4Fe-4S] cluster: cysteine 55, cysteine 56, cysteine 120, and cysteine 151.

The protein belongs to the complex I 20 kDa subunit family. NDH is composed of at least 16 different subunits, 5 of which are encoded in the nucleus. It depends on [4Fe-4S] cluster as a cofactor.

It is found in the plastid. The protein localises to the chloroplast thylakoid membrane. It carries out the reaction a plastoquinone + NADH + (n+1) H(+)(in) = a plastoquinol + NAD(+) + n H(+)(out). The catalysed reaction is a plastoquinone + NADPH + (n+1) H(+)(in) = a plastoquinol + NADP(+) + n H(+)(out). Functionally, NDH shuttles electrons from NAD(P)H:plastoquinone, via FMN and iron-sulfur (Fe-S) centers, to quinones in the photosynthetic chain and possibly in a chloroplast respiratory chain. The immediate electron acceptor for the enzyme in this species is believed to be plastoquinone. Couples the redox reaction to proton translocation, and thus conserves the redox energy in a proton gradient. In Nephroselmis olivacea (Green alga), this protein is NAD(P)H-quinone oxidoreductase subunit K, chloroplastic.